The chain runs to 343 residues: Putative MO25-like protein At4g17270 (343 aa).

Belongs to the Mo25 family.

The chain is Putative MO25-like protein At4g17270 from Arabidopsis thaliana (Mouse-ear cress).